A 78-amino-acid polypeptide reads, in one-letter code: Probable [Fe-S]-dependent transcriptional repressor (78 aa).

Residues Cys-56, Cys-61, Cys-64, and Cys-70 each contribute to the iron-sulfur cluster site.

It belongs to the FeoC family.

Functionally, may function as a transcriptional regulator that controls feoABC expression. The chain is Probable [Fe-S]-dependent transcriptional repressor from Salmonella heidelberg (strain SL476).